The sequence spans 894 residues: RNA polymerase I-specific transcription initiation factor RRN6 (894 aa).

The segment at 803 to 894 (PPFNLNSQSQ…KKKKRIRGFG (92 aa)) is disordered. 3 stretches are compositionally biased toward polar residues: residues 806–823 (NLNS…QSSG), 832–849 (KTQS…QNLS), and 863–880 (QPPS…PRNS). Positions 881 to 894 (QKAKKKKKRIRGFG) are enriched in basic residues.

Component of the core factor (CF) complex, which consists of RRN6, RRN7 and RRN11. The CF heterotrimer may further dimerize to form a hexamer. RRN6 interacts with RRN7, RRN11 and RRN9.

It localises to the cytoplasm. It is found in the nucleus. The protein resides in the nucleolus. Functionally, acts as a component of the core factor (CF) complex which is essential for the initiation of rDNA transcription by RNA polymerase I. After binding of UAF (upstream activation factor) to an upstream element of the promoter, CF is recruited in a SPT15/TBP-dependent manner to form a preinitiation complex. This chain is RNA polymerase I-specific transcription initiation factor RRN6 (RRN6), found in Saccharomyces cerevisiae (strain ATCC 204508 / S288c) (Baker's yeast).